The chain runs to 256 residues: Type III pantothenate kinase (256 aa).

6–13 (DVGNTNMV) is an ATP binding site. Substrate is bound by residues Tyr100 and 107-110 (GADR). The active-site Proton acceptor is Asp109. Asp129 contacts K(+). Thr132 contributes to the ATP binding site. Residue Thr184 participates in substrate binding.

This sequence belongs to the type III pantothenate kinase family. As to quaternary structure, homodimer. NH4(+) is required as a cofactor. Requires K(+) as cofactor.

The protein resides in the cytoplasm. It catalyses the reaction (R)-pantothenate + ATP = (R)-4'-phosphopantothenate + ADP + H(+). Its pathway is cofactor biosynthesis; coenzyme A biosynthesis; CoA from (R)-pantothenate: step 1/5. Catalyzes the phosphorylation of pantothenate (Pan), the first step in CoA biosynthesis. This Clostridioides difficile (strain 630) (Peptoclostridium difficile) protein is Type III pantothenate kinase.